The sequence spans 675 residues: PML-RARA-regulated adapter molecule 1 (675 aa).

Polar residues predominate over residues 1 to 19 (MGSNQDFRNLQAKFQTSQP). Disordered regions lie at residues 1-473 (MGSN…GPIN) and 523-562 (TDDS…PQQL). A compositionally biased stretch (basic and acidic residues) spans 23-35 (ELFRKTPKPELNK). The segment covering 43–58 (TELSEQPKKSSQSELS) has biased composition (polar residues). Basic and acidic residues predominate over residues 141 to 150 (PKPEFGELSK). Polar residues-rich tracts occupy residues 224–242 (RKSQ…SPSK), 251–264 (HSPQ…PKNN), and 322–331 (LQPSDLTRAS). Phosphoserine is present on Ser374. Residues 407 to 422 (SECSLPSASAGSSPQC) are compositionally biased toward polar residues. Over residues 462-471 (PAKPALPPGP) the composition is skewed to pro residues. Residues 537–546 (LSTQQATRWP) show a composition bias toward polar residues. One can recognise an SH3 domain in the interval 578–656 (KAEREFRKKF…PRTALLPLET (79 aa)).

Interacts with SKAP2, LCP2 and DBNL. May interact with LYN. Interacts with NEK6. Post-translationally, may be phosphorylated on tyrosines. Expressed in bone marrow and mature neutrophils. Weakly expressed in macrophages and mast cells.

Functionally, may be involved in integrin signaling in neutrophils. Binds to PtdIns(4)P. The protein is PML-RARA-regulated adapter molecule 1 (Pram1) of Mus musculus (Mouse).